The primary structure comprises 233 residues: Ribonuclease 3 (233 aa).

The region spanning 4 to 126 (LNKLMERLGH…IVGSIYIDAG (123 aa)) is the RNase III domain. A Mg(2+)-binding site is contributed by glutamate 39. Aspartate 43 is an active-site residue. Positions 112 and 115 each coordinate Mg(2+). Residue glutamate 115 is part of the active site. Positions 153–222 (DAKSLLQEWL…AKRFLELLDD (70 aa)) constitute a DRBM domain.

It belongs to the ribonuclease III family. Homodimer. Requires Mg(2+) as cofactor.

It is found in the cytoplasm. It carries out the reaction Endonucleolytic cleavage to 5'-phosphomonoester.. Digests double-stranded RNA. Involved in the processing of primary rRNA transcript to yield the immediate precursors to the large and small rRNAs (23S and 16S). Processes some mRNAs, and tRNAs when they are encoded in the rRNA operon. Processes pre-crRNA and tracrRNA of type II CRISPR loci if present in the organism. The protein is Ribonuclease 3 of Coxiella burnetii (strain CbuG_Q212) (Coxiella burnetii (strain Q212)).